The primary structure comprises 108 residues: DNA-directed RNA polymerase III subunit RPC10 (108 aa).

Residues Cys5, Cys8, Cys25, Cys28, Cys69, and Cys72 each contribute to the Zn(2+) site. The C4-type zinc-finger motif lies at 5 to 28 (CPGCGNGLIVEEGQRCHRFACNTC). The TFIIS-type zinc-finger motif lies at 65–107 (TAESCPKCEHPRAYFMQLQTRSADEPMTTFYKCCNAQCGHRWR). The short motif at 88-89 (DE) is the Hairpin element. Zn(2+)-binding residues include Cys98 and Cys102.

It belongs to the archaeal RpoM/eukaryotic RPA12/RPB9/RPC11 RNA polymerase family. In terms of assembly, component of the RNA polymerase III complex consisting of 17 subunits: a ten-subunit horseshoe-shaped catalytic core composed of POLR3A/RPC1, POLR3B/RPC2, POLR1C/RPAC1, POLR1D/RPAC2, POLR3K/RPC10, POLR2E/RPABC1, POLR2F/RPABC2, POLR2H/RPABC3, POLR2K/RPABC4 and POLR2L/RPABC5; a mobile stalk composed of two subunits POLR3H/RPC8 and CRCP/RPC9, protruding from the core and functioning primarily in transcription initiation; and additional subunits homologous to general transcription factors of the RNA polymerase II machinery, POLR3C/RPC3-POLR3F/RPC6-POLR3G/RPC7 heterotrimer required for transcription initiation and POLR3D/RPC4-POLR3E/RPC5 heterodimer involved in both transcription initiation and termination.

It is found in the nucleus. Core component of RNA polymerase III (Pol III) which synthesizes small non-coding RNAs using the four ribonucleoside triphosphates as substrates. Can mediate Pol I proofreading of the nascent RNA transcript. Anchors into the Pol III active site to constantly monitor transcription fidelity, cleaves mis-incorporated 5'-ribonucleotides and restarts the transcription process. Once Pol III reaches the poly(dT) termination signal, can induce Pol III clamp opening and transcription termination. Pol III plays an important role in sensing and limiting infection by intracellular bacteria and DNA viruses. Acts as a nuclear and cytosolic DNA sensor involved in innate immune response. Can sense non-self dsDNA that serves as template for transcription into dsRNA. The non-self RNA polymerase III transcripts, such as Epstein-Barr virus-encoded RNAs (EBERs) induce type I interferon and NF-kappa-B through the RIG-I pathway. The sequence is that of DNA-directed RNA polymerase III subunit RPC10 from Homo sapiens (Human).